The chain runs to 489 residues: Zinc finger protein 772 (489 aa).

A KRAB domain is found at 27 to 98; sequence VNFEDVFVYF…DWVDMTLAVA (72 aa). C2H2-type zinc fingers lie at residues 144–166, 172–194, 266–288, 294–316, 322–344, 350–372, 378–400, 406–428, 434–456, and 462–484; these read YPCG…QETH, YMCV…QKQH, YKCS…QRVH, YECG…QRIH, YECG…QRVH, YKCS…ESIH, YECS…WSVH, YECI…QRVH, YVCS…HRIH, and YKCS…WKIH.

This sequence belongs to the krueppel C2H2-type zinc-finger protein family.

It localises to the nucleus. Its function is as follows. May be involved in transcriptional regulation. The sequence is that of Zinc finger protein 772 (ZNF772) from Homo sapiens (Human).